Consider the following 121-residue polypeptide: Large ribosomal subunit protein bL21c (121 aa).

The protein belongs to the bacterial ribosomal protein bL21 family. In terms of assembly, part of the 50S ribosomal subunit.

The protein localises to the plastid. The protein resides in the chloroplast. This protein binds to 23S rRNA. This Huperzia lucidula (Shining clubmoss) protein is Large ribosomal subunit protein bL21c.